Here is a 198-residue protein sequence, read N- to C-terminus: Recombination protein RecR (198 aa).

Residues 57 to 72 (CSVCGHITENDPCYIC) form a C4-type zinc finger. Residues 80–175 (SVICVVEDDK…KVTRLAQGLS (96 aa)) enclose the Toprim domain.

Belongs to the RecR family.

May play a role in DNA repair. It seems to be involved in an RecBC-independent recombinational process of DNA repair. It may act with RecF and RecO. The protein is Recombination protein RecR of Staphylococcus epidermidis (strain ATCC 35984 / DSM 28319 / BCRC 17069 / CCUG 31568 / BM 3577 / RP62A).